We begin with the raw amino-acid sequence, 497 residues long: Glycerol kinase (497 aa).

An ADP-binding site is contributed by Thr-12. Thr-12, Thr-13, and Ser-14 together coordinate ATP. Thr-12 provides a ligand contact to sn-glycerol 3-phosphate. Arg-16 provides a ligand contact to ADP. The sn-glycerol 3-phosphate site is built by Arg-82, Glu-83, Tyr-134, and Asp-243. The glycerol site is built by Arg-82, Glu-83, Tyr-134, Asp-243, and Gln-244. Residues Thr-265 and Gly-308 each contribute to the ADP site. 4 residues coordinate ATP: Thr-265, Gly-308, Gln-312, and Gly-411. Residue Gly-411 participates in ADP binding.

Belongs to the FGGY kinase family.

The catalysed reaction is glycerol + ATP = sn-glycerol 3-phosphate + ADP + H(+). Its pathway is polyol metabolism; glycerol degradation via glycerol kinase pathway; sn-glycerol 3-phosphate from glycerol: step 1/1. Its activity is regulated as follows. Inhibited by fructose 1,6-bisphosphate (FBP). Functionally, key enzyme in the regulation of glycerol uptake and metabolism. Catalyzes the phosphorylation of glycerol to yield sn-glycerol 3-phosphate. The sequence is that of Glycerol kinase from Sinorhizobium fredii (strain NBRC 101917 / NGR234).